The chain runs to 123 residues: Small ribosomal subunit protein uS13 (123 aa).

It belongs to the universal ribosomal protein uS13 family. As to quaternary structure, part of the 30S ribosomal subunit. Forms a loose heterodimer with protein S19. Forms two bridges to the 50S subunit in the 70S ribosome.

In terms of biological role, located at the top of the head of the 30S subunit, it contacts several helices of the 16S rRNA. In the 70S ribosome it contacts the 23S rRNA (bridge B1a) and protein L5 of the 50S subunit (bridge B1b), connecting the 2 subunits; these bridges are implicated in subunit movement. Contacts the tRNAs in the A and P-sites. In Neorickettsia sennetsu (strain ATCC VR-367 / Miyayama) (Ehrlichia sennetsu), this protein is Small ribosomal subunit protein uS13.